A 631-amino-acid chain; its full sequence is 1-deoxy-D-xylulose-5-phosphate synthase (631 aa).

Thiamine diphosphate contacts are provided by residues His87 and 128-130; that span reads GHS. Asp159 serves as a coordination point for Mg(2+). Residues 160–161, Asn188, Phe295, and Glu377 contribute to the thiamine diphosphate site; that span reads GA. Asn188 lines the Mg(2+) pocket.

This sequence belongs to the transketolase family. DXPS subfamily. In terms of assembly, homodimer. Mg(2+) serves as cofactor. The cofactor is thiamine diphosphate.

The enzyme catalyses D-glyceraldehyde 3-phosphate + pyruvate + H(+) = 1-deoxy-D-xylulose 5-phosphate + CO2. It participates in metabolic intermediate biosynthesis; 1-deoxy-D-xylulose 5-phosphate biosynthesis; 1-deoxy-D-xylulose 5-phosphate from D-glyceraldehyde 3-phosphate and pyruvate: step 1/1. Functionally, catalyzes the acyloin condensation reaction between C atoms 2 and 3 of pyruvate and glyceraldehyde 3-phosphate to yield 1-deoxy-D-xylulose-5-phosphate (DXP). The polypeptide is 1-deoxy-D-xylulose-5-phosphate synthase (Pseudomonas putida (strain ATCC 47054 / DSM 6125 / CFBP 8728 / NCIMB 11950 / KT2440)).